The sequence spans 351 residues: Photosystem II D2 protein (351 aa).

Residues 39-59 traverse the membrane as a helical segment; it reads CSYLALGGWLTGTTFVTSWYT. Histidine 116 lines the chlorophyll a pocket. Residues 123 to 139 form a helical membrane-spanning segment; that stretch reads GFCLRQFEIARLVGIRP. The pheophytin a site is built by glutamine 128 and asparagine 141. Residues 151 to 164 traverse the membrane as a helical segment; sequence VFVSVFLMYPLGQA. Histidine 196 provides a ligand contact to chlorophyll a. The chain crosses the membrane as a helical span at residues 206–226; it reads GALLCAIHGATVQNTLFEDGD. Positions 213 and 260 each coordinate a plastoquinone. Histidine 213 provides a ligand contact to Fe cation. Histidine 267 contributes to the Fe cation binding site. The helical transmembrane segment at 277-293 threads the bilayer; sequence GLWTSAFGIVGLALNLR.

Belongs to the reaction center PufL/M/PsbA/D family. PSII is composed of 1 copy each of membrane proteins PsbA, PsbB, PsbC, PsbD, PsbE, PsbF, PsbH, PsbI, PsbJ, PsbK, PsbL, PsbM, PsbT, PsbX, PsbY, PsbZ, Psb30/Ycf12, at least 3 peripheral proteins of the oxygen-evolving complex and a large number of cofactors. It forms dimeric complexes. The D1/D2 heterodimer binds P680, chlorophylls that are the primary electron donor of PSII, and subsequent electron acceptors. It shares a non-heme iron and each subunit binds pheophytin, quinone, additional chlorophylls, carotenoids and lipids. There is also a Cl(-1) ion associated with D1 and D2, which is required for oxygen evolution. The PSII complex binds additional chlorophylls, carotenoids and specific lipids. serves as cofactor.

The protein localises to the plastid. It is found in the chloroplast thylakoid membrane. The catalysed reaction is 2 a plastoquinone + 4 hnu + 2 H2O = 2 a plastoquinol + O2. Its function is as follows. Photosystem II (PSII) is a light-driven water:plastoquinone oxidoreductase that uses light energy to abstract electrons from H(2)O, generating O(2) and a proton gradient subsequently used for ATP formation. It consists of a core antenna complex that captures photons, and an electron transfer chain that converts photonic excitation into a charge separation. The D1/D2 (PsbA/PsbD) reaction center heterodimer binds P680, the primary electron donor of PSII as well as several subsequent electron acceptors. D2 is needed for assembly of a stable PSII complex. The polypeptide is Photosystem II D2 protein (Gracilaria tenuistipitata var. liui (Red alga)).